Here is a 666-residue protein sequence, read N- to C-terminus: UvrABC system protein B (666 aa).

Residues D26–R183 enclose the Helicase ATP-binding domain. G39–T46 contacts ATP. Residues Y92–I115 carry the Beta-hairpin motif. The region spanning Q429 to V591 is the Helicase C-terminal domain. In terms of domain architecture, UVR spans E625–N660.

The protein belongs to the UvrB family. As to quaternary structure, forms a heterotetramer with UvrA during the search for lesions. Interacts with UvrC in an incision complex.

The protein resides in the cytoplasm. Functionally, the UvrABC repair system catalyzes the recognition and processing of DNA lesions. A damage recognition complex composed of 2 UvrA and 2 UvrB subunits scans DNA for abnormalities. Upon binding of the UvrA(2)B(2) complex to a putative damaged site, the DNA wraps around one UvrB monomer. DNA wrap is dependent on ATP binding by UvrB and probably causes local melting of the DNA helix, facilitating insertion of UvrB beta-hairpin between the DNA strands. Then UvrB probes one DNA strand for the presence of a lesion. If a lesion is found the UvrA subunits dissociate and the UvrB-DNA preincision complex is formed. This complex is subsequently bound by UvrC and the second UvrB is released. If no lesion is found, the DNA wraps around the other UvrB subunit that will check the other stand for damage. This Leptospira borgpetersenii serovar Hardjo-bovis (strain JB197) protein is UvrABC system protein B.